A 170-amino-acid chain; its full sequence is Thialysine N-epsilon-acetyltransferase (170 aa).

The 165-residue stretch at 4–168 (VRIREAKEGD…FQGEATRKLA (165 aa)) folds into the N-acetyltransferase domain. A substrate-binding site is contributed by 27 to 28 (FE). The residue at position 29 (Lys29) is an N6-acetyllysine. Residue Glu92 participates in substrate binding. Acetyl-CoA is bound by residues 94–96 (IYV), 102–107 (GQGIGS), 133–135 (NQR), and Tyr140. Tyr140 acts as the Proton donor in catalysis. Residue Glu152 participates in substrate binding.

It belongs to the acetyltransferase family. In terms of assembly, homodimer. As to expression, widely expressed. Under physiological conditions, SSAT2 is expressed at lower level that SSAT1 (SSAT). Many tissues express only SSAT1, several tissues express both SSAT1 and SSAT2, and bone, cervix, ovary and pineal gland expressed only SSAT2.

It is found in the cytoplasm. It carries out the reaction S-(2-aminoethyl)-L-cysteine + acetyl-CoA = S-(2-acetamidoethyl)-L-cysteine + CoA + H(+). It catalyses the reaction an alkane-alpha,omega-diamine + acetyl-CoA = an N-acetylalkane-alpha,omega-diamine + CoA + H(+). Functionally, catalyzes the N-acetylation of the amino acid thialysine (S-(2-aminoethyl)-L-cysteine), a L-lysine analog with the 4-methylene group substituted with a sulfur. May also catalyze acetylation of polyamines, such as norspermidine, spermidine or spermine. However, ability to acetylate polyamines is weak, suggesting that it does not act as a diamine acetyltransferase in vivo. In Homo sapiens (Human), this protein is Thialysine N-epsilon-acetyltransferase.